A 337-amino-acid polypeptide reads, in one-letter code: Hsp90 co-chaperone Cdc37-like 1 (337 aa).

Residues 1–11 show a composition bias toward pro residues; the sequence is MEQPWPPPGPW. Residues 1–40 are disordered; that stretch reads MEQPWPPPGPWSLPRAEGEAEEESDFDVFPSSPRCPQLPG. Residues 2–171 form a self-association region; that stretch reads EQPWPPPGPW…YEQKIRHFGM (170 aa). 2 positions are modified to phosphoserine: S32 and S88. The stretch at 84–122 forms a coiled coil; it reads HNSESLDQEHAKAQTAVSELRQREEEWRQKEEALVQREK. Positions 147–277 are self-association and interaction with Hsp90; sequence KDTEDEDKSE…SRVRLYSQSQ (131 aa). Positions 267–337 are interaction with Hsp70; that stretch reads KSRVRLYSQS…DDEPKMMDTV (71 aa). A required for interaction with STIP1 region spans residues 278–337; it reads SFQPMTVQNHVPHSGVGSIGLLESLPQNPDYLQYSISTALCSLNSVVHKEDDEPKMMDTV.

Belongs to the CDC37 family. In terms of assembly, self-associates. Forms complexes with Hsp70 and Hsp90. Interacts with CDC37, FKBP4, PPID and STIP1. In terms of tissue distribution, expressed in brain, heart, kidney, liver, placenta and skeletal muscle.

Its subcellular location is the cytoplasm. Functionally, co-chaperone that binds to numerous proteins and promotes their interaction with Hsp70 and Hsp90. In Homo sapiens (Human), this protein is Hsp90 co-chaperone Cdc37-like 1 (CDC37L1).